Consider the following 567-residue polypeptide: Potassium-transporting ATPase potassium-binding subunit (567 aa).

11 helical membrane-spanning segments follow: residues 3-23, 64-84, 136-156, 179-199, 254-274, 285-305, 330-350, 357-376, 421-441, 473-495, and 527-547; these read FIGW…VKPL, LTFT…IYAV, ALTH…MALI, LYVL…QGMP, LSNF…TNVF, WAIL…AYWA, FGIV…CGAV, FTAL…EIIV, MLAI…AVVL, AFGG…MFVG, and GGLF…LTFF.

This sequence belongs to the KdpA family. In terms of assembly, the system is composed of three essential subunits: KdpA, KdpB and KdpC.

The protein resides in the cell inner membrane. Functionally, part of the high-affinity ATP-driven potassium transport (or Kdp) system, which catalyzes the hydrolysis of ATP coupled with the electrogenic transport of potassium into the cytoplasm. This subunit binds the periplasmic potassium ions and delivers the ions to the membrane domain of KdpB through an intramembrane tunnel. This chain is Potassium-transporting ATPase potassium-binding subunit, found in Rhodopseudomonas palustris (strain ATCC BAA-98 / CGA009).